The sequence spans 133 residues: Putative pre-16S rRNA nuclease (133 aa).

Belongs to the YqgF nuclease family.

The protein resides in the cytoplasm. In terms of biological role, could be a nuclease involved in processing of the 5'-end of pre-16S rRNA. This is Putative pre-16S rRNA nuclease from Alcanivorax borkumensis (strain ATCC 700651 / DSM 11573 / NCIMB 13689 / SK2).